The chain runs to 173 residues: uncharacterized protein (173 aa).

Positions 49 to 72 (PTRSGRTSNSGNRGPVMTSTSSIN) are disordered.

This is an uncharacterized protein from Human adenovirus B serotype 7 (HAdV-7).